The following is a 584-amino-acid chain: 4-hydroxybenzoate decarboxylase subunit C (584 aa).

It belongs to the UbiD family. As to quaternary structure, component of the decarboxylase complex composed of the subunits B and C (Potential). The subunit D usually found in other organisms seems to be absent.

The catalysed reaction is 4-hydroxybenzoate + H(+) = phenol + CO2. The enzyme activity is enhanced by Mg(2+), Fe(2+), Mn(2+) and Ca(2+). No stimulation is observed with Cu(2+) and Zn(2+). Its function is as follows. Catalyzes the reversible decarboxylation of 4-hydroxybenzoate. The chain is 4-hydroxybenzoate decarboxylase subunit C from Chlamydia pneumoniae (Chlamydophila pneumoniae).